We begin with the raw amino-acid sequence, 565 residues long: Dihydroxy-acid dehydratase (565 aa).

Residue Cys-53 coordinates [2Fe-2S] cluster. Asp-85 provides a ligand contact to Mg(2+). Cys-126 provides a ligand contact to [2Fe-2S] cluster. Mg(2+) is bound by residues Asp-127 and Lys-128. Lys-128 is modified (N6-carboxylysine). Cys-198 contacts [2Fe-2S] cluster. Residue Glu-450 participates in Mg(2+) binding. Ser-476 (proton acceptor) is an active-site residue.

It belongs to the IlvD/Edd family. Homodimer. It depends on [2Fe-2S] cluster as a cofactor. Mg(2+) is required as a cofactor.

It catalyses the reaction (2R)-2,3-dihydroxy-3-methylbutanoate = 3-methyl-2-oxobutanoate + H2O. The enzyme catalyses (2R,3R)-2,3-dihydroxy-3-methylpentanoate = (S)-3-methyl-2-oxopentanoate + H2O. It participates in amino-acid biosynthesis; L-isoleucine biosynthesis; L-isoleucine from 2-oxobutanoate: step 3/4. The protein operates within amino-acid biosynthesis; L-valine biosynthesis; L-valine from pyruvate: step 3/4. Its function is as follows. Functions in the biosynthesis of branched-chain amino acids. Catalyzes the dehydration of (2R,3R)-2,3-dihydroxy-3-methylpentanoate (2,3-dihydroxy-3-methylvalerate) into 2-oxo-3-methylpentanoate (2-oxo-3-methylvalerate) and of (2R)-2,3-dihydroxy-3-methylbutanoate (2,3-dihydroxyisovalerate) into 2-oxo-3-methylbutanoate (2-oxoisovalerate), the penultimate precursor to L-isoleucine and L-valine, respectively. The chain is Dihydroxy-acid dehydratase from Synechococcus sp. (strain JA-2-3B'a(2-13)) (Cyanobacteria bacterium Yellowstone B-Prime).